The sequence spans 135 residues: Large ribosomal subunit protein uL16 (135 aa).

This sequence belongs to the universal ribosomal protein uL16 family. Part of the 50S ribosomal subunit.

Its function is as follows. Binds 23S rRNA and is also seen to make contacts with the A and possibly P site tRNAs. This chain is Large ribosomal subunit protein uL16, found in Bdellovibrio bacteriovorus (strain ATCC 15356 / DSM 50701 / NCIMB 9529 / HD100).